Consider the following 142-residue polypeptide: Large ribosomal subunit protein uL13 (142 aa).

The protein belongs to the universal ribosomal protein uL13 family. In terms of assembly, part of the 50S ribosomal subunit.

Functionally, this protein is one of the early assembly proteins of the 50S ribosomal subunit, although it is not seen to bind rRNA by itself. It is important during the early stages of 50S assembly. The chain is Large ribosomal subunit protein uL13 from Caldicellulosiruptor saccharolyticus (strain ATCC 43494 / DSM 8903 / Tp8T 6331).